We begin with the raw amino-acid sequence, 563 residues long: uncharacterized protein (563 aa).

Residues 30-303 form a disordered region; sequence QSIEIQPEEK…EKSPEKQVEI (274 aa). Over residues 36-56 the composition is skewed to basic and acidic residues; that stretch reads PEEKPSEEKQPEEKSSEEKPK. Residues 61–72 are compositionally biased toward polar residues; the sequence is SAINSEKTQKPI. Composition is skewed to basic and acidic residues over residues 101–115, 123–276, and 282–303; these read TTER…DDKQ, ERGR…EPRP, and EKSP…QVEI.

This sequence belongs to the mimivirus L41 family.

This is an uncharacterized protein from Acanthamoeba polyphaga (Amoeba).